The chain runs to 361 residues: UDP-N-acetylglucosamine--N-acetylmuramyl-(pentapeptide) pyrophosphoryl-undecaprenol N-acetylglucosamine transferase (361 aa).

Residues Ser-199 and Gln-290 each contribute to the UDP-N-acetyl-alpha-D-glucosamine site.

The protein belongs to the glycosyltransferase 28 family. MurG subfamily.

It is found in the cell membrane. It catalyses the reaction Mur2Ac(oyl-L-Ala-gamma-D-Glu-L-Lys-D-Ala-D-Ala)-di-trans,octa-cis-undecaprenyl diphosphate + UDP-N-acetyl-alpha-D-glucosamine = beta-D-GlcNAc-(1-&gt;4)-Mur2Ac(oyl-L-Ala-gamma-D-Glu-L-Lys-D-Ala-D-Ala)-di-trans,octa-cis-undecaprenyl diphosphate + UDP + H(+). It participates in cell wall biogenesis; peptidoglycan biosynthesis. Cell wall formation. Catalyzes the transfer of a GlcNAc subunit on undecaprenyl-pyrophosphoryl-MurNAc-pentapeptide (lipid intermediate I) to form undecaprenyl-pyrophosphoryl-MurNAc-(pentapeptide)GlcNAc (lipid intermediate II). In Streptococcus mutans serotype c (strain ATCC 700610 / UA159), this protein is UDP-N-acetylglucosamine--N-acetylmuramyl-(pentapeptide) pyrophosphoryl-undecaprenol N-acetylglucosamine transferase.